We begin with the raw amino-acid sequence, 464 residues long: Isthmin-1 (464 aa).

A signal peptide spans 1–29 (MVRLAAELLLLLGLLLLTLHITVLRGSGA). N-linked (GlcNAc...) asparagine glycosylation is present at N39. Disordered regions lie at residues 50–98 (NVGS…LQRD), 135–155 (PDSE…SVPS), and 173–219 (SGDQ…STDG). Residues 51 to 63 (VGSDTTSETSFSL) are compositionally biased toward polar residues. Basic and acidic residues-rich tracts occupy residues 66–76 (EAPREHLDHQA) and 138–147 (EADKDQHPEN). The TSP type-1 domain maps to 218–262 (DGEGDWSLWSVCSVTCGNGNQKRTRSCGYACTATESRTCDRPNCP). 3 disulfides stabilise this stretch: C229-C256, C233-C261, and C244-C248. Residues 289-452 (LFEVDTDSCE…QKCTESPSDE (164 aa)) form the AMOP domain.

The protein belongs to the isthmin family. Interacts with integrin ITGAV/ITGB5.

Its subcellular location is the secreted. Its function is as follows. Acts as an angiogenesis inhibitor. The sequence is that of Isthmin-1 (ISM1) from Homo sapiens (Human).